Consider the following 344-residue polypeptide: Aspartate-semialdehyde dehydrogenase (344 aa).

Residues 10–13 and 38–39 contribute to the NADP(+) site; these read TGQV and RS. R101 is a binding site for phosphate. Catalysis depends on C131, which acts as the Acyl-thioester intermediate. A substrate-binding site is contributed by Q158. 161–162 lines the NADP(+) pocket; sequence SG. Position 228 (K228) interacts with phosphate. Substrate is bound at residue R250. H257 functions as the Proton acceptor in the catalytic mechanism. N326 serves as a coordination point for NADP(+).

Belongs to the aspartate-semialdehyde dehydrogenase family. As to quaternary structure, homodimer.

It carries out the reaction L-aspartate 4-semialdehyde + phosphate + NADP(+) = 4-phospho-L-aspartate + NADPH + H(+). The protein operates within amino-acid biosynthesis; L-lysine biosynthesis via DAP pathway; (S)-tetrahydrodipicolinate from L-aspartate: step 2/4. It participates in amino-acid biosynthesis; L-methionine biosynthesis via de novo pathway; L-homoserine from L-aspartate: step 2/3. Its pathway is amino-acid biosynthesis; L-threonine biosynthesis; L-threonine from L-aspartate: step 2/5. Its function is as follows. Catalyzes the NADPH-dependent formation of L-aspartate-semialdehyde (L-ASA) by the reductive dephosphorylation of L-aspartyl-4-phosphate. The sequence is that of Aspartate-semialdehyde dehydrogenase from Corynebacterium glutamicum (strain ATCC 13032 / DSM 20300 / JCM 1318 / BCRC 11384 / CCUG 27702 / LMG 3730 / NBRC 12168 / NCIMB 10025 / NRRL B-2784 / 534).